The sequence spans 32 residues: Cytochrome b6-f complex subunit 7 (32 aa).

The helical transmembrane segment at 9 to 27 (AALFWVLIPLGLAGGALLL) threads the bilayer.

This sequence belongs to the PetM family. As to quaternary structure, the 4 large subunits of the cytochrome b6-f complex are cytochrome b6, subunit IV (17 kDa polypeptide, PetD), cytochrome f and the Rieske protein, while the 4 small subunits are PetG, PetL, PetM and PetN. The complex functions as a dimer.

The protein localises to the cellular thylakoid membrane. Its function is as follows. Component of the cytochrome b6-f complex, which mediates electron transfer between photosystem II (PSII) and photosystem I (PSI), cyclic electron flow around PSI, and state transitions. The chain is Cytochrome b6-f complex subunit 7 from Synechococcus sp. (strain RCC307).